A 471-amino-acid chain; its full sequence is 7-dehydrocholesterol reductase (471 aa).

Residues 1 to 23 form a disordered region; it reads MASKSQHNAPKVKSPNGKAGSQG. Ser-14 is subject to Phosphoserine. 8 helical membrane passes run 36–56, 95–115, 144–164, 173–193, 233–253, 262–282, 302–322, and 327–347; these read LASI…FIMA, LYAL…DFCH, LQAW…LSWF, WIPL…FAMI, LFFN…SFAA, VTNS…DFFW, LGWG…LYLV, and QLST…YYIF. NADP(+)-binding positions include Lys-354, Arg-358, Leu-391, Trp-396, and 403-404; that span reads NY. Residues 416–436 traverse the membrane as a helical segment; it reads LACGGGHLLPYFYIIYMTILL. Residues Asp-443, 447 to 451, and Tyr-458 contribute to the NADP(+) site; that span reads CANKY.

Belongs to the ERG4/ERG24 family. In terms of assembly, interacts with DHCR24; this interaction regulates DHCR7 activity. Interacts with TMEM147.

The protein resides in the endoplasmic reticulum membrane. It catalyses the reaction cholesterol + NADP(+) = 7-dehydrocholesterol + NADPH + H(+). It carries out the reaction 7-dehydrodesmosterol + NADPH + H(+) = desmosterol + NADP(+). The catalysed reaction is 5,6alpha-epoxy-5alpha-cholestan-3beta-ol + H2O = 5alpha-cholestane-3beta,5,6beta-triol. The enzyme catalyses 5,6beta-epoxy-5beta-cholestan-3beta-ol + H2O = 5alpha-cholestane-3beta,5,6beta-triol. It participates in steroid biosynthesis; cholesterol biosynthesis. In terms of biological role, oxidoreductase that catalyzes the last step of the cholesterol synthesis pathway, which transforms cholesta-5,7-dien-3beta-ol (7-dehydrocholesterol,7-DHC) into cholesterol by reducing the C7-C8 double bond of its sterol core. Can also metabolize cholesta-5,7,24-trien-3beta-ol (7-dehydrodemosterol, 7-DHD) to desmosterol, which is then metabolized by the Delta(24)-sterol reductase (DHCR24) to cholesterol. Modulates ferroptosis (a form of regulated cell death driven by iron-dependent lipid peroxidation) through the metabolic breakdown of the anti-ferroptotic metabolites 7-DHC and 7-DHD which, when accumulated, divert the propagation of peroxyl radical-mediated damage from phospholipid components to its sterol core, protecting plasma and mitochondrial membranes from phospholipid autoxidation. Component of the microsomal antiestrogen binding site (AEBS), a multiproteic complex at the ER membrane that consists of an association between cholestenol Delta-isomerase/EBP and DHCR7. This complex is responsible for cholesterol-5,6-epoxide hydrolase (ChEH) activity, which consists in the hydration of cholesterol-5,6-epoxides (5,6-EC) into cholestane-3beta,5alpha,6beta-triol (CT). The precise role of each component of this complex has not been described yet. This chain is 7-dehydrocholesterol reductase (Dhcr7), found in Mus musculus (Mouse).